Here is a 364-residue protein sequence, read N- to C-terminus: Sorbitol dehydrogenase (364 aa).

Cysteine 54 contributes to the Zn(2+) binding site. Tyrosine 60 lines the substrate pocket. Histidine 79 and glutamate 80 together coordinate Zn(2+). Glutamate 165 lines the substrate pocket. NAD(+)-binding positions include isoleucine 193, aspartate 213, arginine 218, 284-286 (VGM), and 308-310 (VFR). Residues arginine 310 and tyrosine 311 each coordinate substrate.

The protein belongs to the zinc-containing alcohol dehydrogenase family. Homotetramer. It depends on Zn(2+) as a cofactor. In terms of tissue distribution, mostly expressed in dry seeds and leaves, and, to a lower extent, in roots, stems, flowers and siliques (at protein level).

It localises to the mitochondrion membrane. It is found in the cell membrane. The protein resides in the cytoplasm. The protein localises to the cytosol. It catalyses the reaction keto-D-fructose + NADH + H(+) = D-sorbitol + NAD(+). It carries out the reaction ribitol + NAD(+) = D-ribulose + NADH + H(+). The enzyme catalyses xylitol + NAD(+) = D-xylulose + NADH + H(+). In terms of biological role, polyol dehydrogenase that catalyzes the NAD(+)-dependent oxidation of various sugar alcohols. Is mostly active with D-sorbitol (D-glucitol), ribitol and xylitol as substrates, leading to the C2-oxidized products D-fructose, D-ribulose and D-xylulose, respectively. To a lesser extent, can also oxidize arabitol, mannitol, lactitol and maltitol in vitro. Is required for sorbitol metabolism. Cannot use NADP(+) as the electron acceptor. The sequence is that of Sorbitol dehydrogenase (SDH) from Arabidopsis thaliana (Mouse-ear cress).